Reading from the N-terminus, the 687-residue chain is MSGRNNNKLPSNLPQLQNLIKRDPPAYVEEFLQQYNHYKSNMEIFKLQPNKPSKELAELVMFMAQIGQCYPEHLSNFPQELKDLLSYNHTVLDPDLRMTFCKALILLRNKNLINPSSLLELFFELLRCHDKLLRKTLYTHIVTDIKNINAKHKNNKVNVVLQNFMYTMLRDSNATAAKMSLDVMIELYRRNIWNDAKTVNVITTACFSKITKILVAALTFFLGKDEEEKQDSDSESEDDGPTARDLLVQYATGKKGSKNKKKLEKAMKVLKKQKKKKKPEVFNFSAIHLIHDPQDFAEKLLKQLESCKERFEVKMMLMNLISRLVGIHELFLFNFYPFVQRFLQPHQREVTKILLFAAQASHHLVPPEIIQSLLVTVANNFVTDKNSGEVMTVGINAIKEITARCPLAMTEELLQDLAQYKTHKDKNVMMSARTLIHLFRTLNPQMLQKKFRGKPTEASIEARIQEYGELDAKDYIPGAEVLELEKGENTEDDEDGWESASLSEEEEEDGEWVDVHHSSDEEQQAIATKLDSMPMEERKAKAAAISTSRVLTQDDFQKIRMAQMKKEMDAAPGKAQKRKYLEIDSDEESRGELLSLRDIERLHKKPKSDKETRLATAMAGRTDRKEFVRKKTKINPFSSSTNKEKKKQKNFMMMRYSQNVRSKSARSFRDKQLALRDALLKKRKRMK.

A phosphoserine mark is found at Ser-232, Ser-234, and Ser-236. A coiled-coil region spans residues 254–315 (KKGSKNKKKL…SCKERFEVKM (62 aa)). A disordered region spans residues 484–509 (LEKGENTEDDEDGWESASLSEEEEED). The span at 490 to 509 (TEDDEDGWESASLSEEEEED) shows a compositional bias: acidic residues. Thr-552 is subject to Phosphothreonine. Ser-585, Ser-589, and Ser-595 each carry phosphoserine. Residues 604–651 (KKPKSDKETRLATAMAGRTDRKEFVRKKTKINPFSSSTNKEKKKQKNF) form a disordered region.

It belongs to the SDA1 family.

It is found in the nucleus. Its subcellular location is the nucleolus. Functionally, required for 60S pre-ribosomal subunits export to the cytoplasm. In Mus musculus (Mouse), this protein is Protein SDA1 homolog (Sdad1).